A 131-amino-acid polypeptide reads, in one-letter code: Fluoride-specific ion channel FluC 2 (131 aa).

A run of 4 helical transmembrane segments spans residues Ser5–Ile25, Trp35–Gly55, Pro59–Phe79, and Leu95–Val115. Residues Gly71 and Thr74 each contribute to the Na(+) site.

This sequence belongs to the fluoride channel Fluc/FEX (TC 1.A.43) family.

Its subcellular location is the cell membrane. The enzyme catalyses fluoride(in) = fluoride(out). With respect to regulation, na(+) is not transported, but it plays an essential structural role and its presence is essential for fluoride channel function. In terms of biological role, fluoride-specific ion channel. Important for reducing fluoride concentration in the cell, thus reducing its toxicity. The sequence is that of Fluoride-specific ion channel FluC 2 from Bacillus subtilis (strain 168).